A 348-amino-acid polypeptide reads, in one-letter code: Sulfate/thiosulfate import ATP-binding protein CysA (348 aa).

An ABC transporter domain is found at 3–233 (ILIDNISKKF…PATPFVFSLL (231 aa)). Position 35–42 (35–42 (GPSGSGKS)) interacts with ATP.

This sequence belongs to the ABC transporter superfamily. Sulfate/tungstate importer (TC 3.A.1.6) family.

Its subcellular location is the plastid. It localises to the chloroplast. It catalyses the reaction sulfate(out) + ATP + H2O = sulfate(in) + ADP + phosphate + H(+). The catalysed reaction is thiosulfate(out) + ATP + H2O = thiosulfate(in) + ADP + phosphate + H(+). In terms of biological role, part of the ABC transporter complex involved in sulfate/thiosulfate import. Responsible for energy coupling to the transport system. In Mesostigma viride (Green alga), this protein is Sulfate/thiosulfate import ATP-binding protein CysA.